Here is a 979-residue protein sequence, read N- to C-terminus: Collagen alpha-2(I) chain (979 aa).

Positions S1 to A979 are disordered. P10, P13, P38, and P44 each carry 4-hydroxyproline. Positions L24–P70 are enriched in low complexity. The residue at position 99 (K99) is a 5-hydroxylysine; alternate. K99 carries an O-linked (Gal...) hydroxylysine; alternate glycan. Low complexity-rich tracts occupy residues V147–P176, P222–K263, S272–S282, and R312–R331. 2 positions are modified to 4-hydroxyproline: P334 and P337. Over residues L363–A382 the composition is skewed to low complexity. Gly residues predominate over residues G427 to G436. Residues P483–P500 show a composition bias toward low complexity. Over residues G517–G527 the composition is skewed to gly residues. Low complexity-rich tracts occupy residues V550–S594 and V601–A621. Positions K622–K631 are enriched in basic and acidic residues. The segment covering P639–A649 has biased composition (low complexity). A compositionally biased stretch (gly residues) spans G659–G668. A compositionally biased stretch (low complexity) spans A669–T679. Over residues G710 to G724 the composition is skewed to gly residues. 2 stretches are compositionally biased toward low complexity: residues F725 to P759 and L767 to P777. Over residues G778–R788 the composition is skewed to gly residues. Positions E840–P855 are enriched in low complexity. The span at R865–P876 shows a compositional bias: basic and acidic residues. Residues S949–P961 are compositionally biased toward pro residues.

This sequence belongs to the fibrillar collagen family. Trimers of one alpha 2(I) and two alpha 1(I) chains. Interacts (via C-terminus) with TMEM131 (via PapD-L domain); the interaction is direct and is involved in assembly and TRAPPIII ER-to-Golgi transport complex-dependent secretion of collagen. Prolines at the third position of the tripeptide repeating unit (G-X-Y) are hydroxylated in some or all of the chains. As to expression, expressed in bones.

The protein resides in the secreted. Its subcellular location is the extracellular space. It is found in the extracellular matrix. Type I collagen is a member of group I collagen (fibrillar forming collagen). The sequence is that of Collagen alpha-2(I) chain from Bradypus variegatus (Brown-throated three-fingered sloth).